The primary structure comprises 227 residues: Phosphoribosylformylglycinamidine synthase subunit PurQ (227 aa).

Residues 3–225 (FAVIVFPGSN…LKQWRETYVV (223 aa)) enclose the Glutamine amidotransferase type-1 domain. Catalysis depends on cysteine 86, which acts as the Nucleophile. Residues histidine 194 and glutamate 196 contribute to the active site.

In terms of assembly, part of the FGAM synthase complex composed of 1 PurL, 1 PurQ and 2 PurS subunits.

Its subcellular location is the cytoplasm. The catalysed reaction is N(2)-formyl-N(1)-(5-phospho-beta-D-ribosyl)glycinamide + L-glutamine + ATP + H2O = 2-formamido-N(1)-(5-O-phospho-beta-D-ribosyl)acetamidine + L-glutamate + ADP + phosphate + H(+). The enzyme catalyses L-glutamine + H2O = L-glutamate + NH4(+). It participates in purine metabolism; IMP biosynthesis via de novo pathway; 5-amino-1-(5-phospho-D-ribosyl)imidazole from N(2)-formyl-N(1)-(5-phospho-D-ribosyl)glycinamide: step 1/2. Its function is as follows. Part of the phosphoribosylformylglycinamidine synthase complex involved in the purines biosynthetic pathway. Catalyzes the ATP-dependent conversion of formylglycinamide ribonucleotide (FGAR) and glutamine to yield formylglycinamidine ribonucleotide (FGAM) and glutamate. The FGAM synthase complex is composed of three subunits. PurQ produces an ammonia molecule by converting glutamine to glutamate. PurL transfers the ammonia molecule to FGAR to form FGAM in an ATP-dependent manner. PurS interacts with PurQ and PurL and is thought to assist in the transfer of the ammonia molecule from PurQ to PurL. This chain is Phosphoribosylformylglycinamidine synthase subunit PurQ, found in Bacillus thuringiensis (strain Al Hakam).